A 305-amino-acid polypeptide reads, in one-letter code: Ribonuclease H (305 aa).

The enzyme catalyses Endonucleolytic cleavage to 5'-phosphomonoester.. Its function is as follows. Plays essential roles in DNA replication by removing the RNA primers from lagging strand fragments. Exhibits 5'to 3' exonuclease activity on either RNA/DNA or DNA/DNA duplexes and endonuclease activity on either flap or fork DNA structures. The chain is Ribonuclease H (rnh) from Enterobacteria phage T4 (Bacteriophage T4).